The primary structure comprises 63 residues: DNA gyrase inhibitor YacG (63 aa).

Residues Cys-9, Cys-12, Cys-28, and Cys-32 each coordinate Zn(2+).

The protein belongs to the DNA gyrase inhibitor YacG family. In terms of assembly, interacts with GyrB. It depends on Zn(2+) as a cofactor.

Functionally, inhibits all the catalytic activities of DNA gyrase by preventing its interaction with DNA. Acts by binding directly to the C-terminal domain of GyrB, which probably disrupts DNA binding by the gyrase. The chain is DNA gyrase inhibitor YacG from Salmonella paratyphi A (strain AKU_12601).